The following is a 145-amino-acid chain: Aspartate 1-decarboxylase (145 aa).

Ser-26 (schiff-base intermediate with substrate; via pyruvic acid) is an active-site residue. Ser-26 carries the pyruvic acid (Ser) modification. Residue Thr-58 participates in substrate binding. Tyr-59 acts as the Proton donor in catalysis. Gly-74–Ala-76 lines the substrate pocket.

The protein belongs to the PanD family. In terms of assembly, heterooctamer of four alpha and four beta subunits. The cofactor is pyruvate. In terms of processing, is synthesized initially as an inactive proenzyme, which is activated by self-cleavage at a specific serine bond to produce a beta-subunit with a hydroxyl group at its C-terminus and an alpha-subunit with a pyruvoyl group at its N-terminus.

Its subcellular location is the cytoplasm. The catalysed reaction is L-aspartate + H(+) = beta-alanine + CO2. It functions in the pathway cofactor biosynthesis; (R)-pantothenate biosynthesis; beta-alanine from L-aspartate: step 1/1. Its function is as follows. Catalyzes the pyruvoyl-dependent decarboxylation of aspartate to produce beta-alanine. This is Aspartate 1-decarboxylase from Synechocystis sp. (strain ATCC 27184 / PCC 6803 / Kazusa).